The following is a 183-amino-acid chain: ATP synthase subunit b, chloroplastic (183 aa).

A helical membrane pass occupies residues 27–49 (LATNLINLTVVVGVLIYFGKGVL).

The protein belongs to the ATPase B chain family. In terms of assembly, F-type ATPases have 2 components, F(1) - the catalytic core - and F(0) - the membrane proton channel. F(1) has five subunits: alpha(3), beta(3), gamma(1), delta(1), epsilon(1). F(0) has four main subunits: a(1), b(1), b'(1) and c(10-14). The alpha and beta chains form an alternating ring which encloses part of the gamma chain. F(1) is attached to F(0) by a central stalk formed by the gamma and epsilon chains, while a peripheral stalk is formed by the delta, b and b' chains.

Its subcellular location is the plastid. The protein resides in the chloroplast thylakoid membrane. Its function is as follows. F(1)F(0) ATP synthase produces ATP from ADP in the presence of a proton or sodium gradient. F-type ATPases consist of two structural domains, F(1) containing the extramembraneous catalytic core and F(0) containing the membrane proton channel, linked together by a central stalk and a peripheral stalk. During catalysis, ATP synthesis in the catalytic domain of F(1) is coupled via a rotary mechanism of the central stalk subunits to proton translocation. Component of the F(0) channel, it forms part of the peripheral stalk, linking F(1) to F(0). This is ATP synthase subunit b, chloroplastic from Oryza nivara (Indian wild rice).